Consider the following 1010-residue polypeptide: DTSEFDPLANKEYTEEQKQTLEQEQKEFLSQTTTPALEADDGFIVTSASFAQSTPSMSVLSGNISPSQTSDPITKAVRETIIQPQKDNLIEQILKDLAALTDRDLAEQKRKEIEEEKEKDKTLSTFFGNPANREFIDKALENPELKKKLESIEIAGYKNVHNTFSAASGYPGGFKPVQWENHVSASDLRATVVKNDAGDELCTLNETTVKTKPFTLAKQDGTQVQISSYREIDFPIKLDKADGSMHLSMVALKADGTKPSKDKPVYFTAHYEEGPNGKPQLKEISSPKPLKFAGTGDDAIAYIEHGGEIYTLAVTRGKYKDMMKEVELNQGQSVDLSQAEDIIIGQGQSKEQPLITPQQTTSSSVEPPQHKQQVPPITPTNQPLQPETSQMPQSQQVNPNLLNTATALSGSMQDLLNYVNAGLTKEIDSNKQIDLIKEAATAILNNEKSDIVEKQANIIALAENTVNNKNLKPDAKVAGVNAVLEIIKNDQNTPNLEKSKMLEATVAIVLNSENLEPKQKQQMLEKAVDVGLSLKDDASRAATIDGIKDVVIKSNLYTEDKGTMLIAVGDKVNVSELSNAEKQKLLGSVLKKGVEAQVLSPAQQQLMQQHLDKITAEQTKKDTIKKVNDILFDPLSNTELKTTNIQAITSNVLDGPATAEVKGEIIQEITNTVAGSSLEAQDKAEIVKGVGETIATHSDTSLSLPNKALIMASAEKGIAESKTNLPDRELMTKVLVDGIYEGKGGPEITKAVSSGIDNSNINDSEKEALKKAKDAASEAALDRDTQNLTEGFKGQNIEEHKPHDDIYNKAREVINAVNPVIEALEKSKEPVVSAEERIVQETSSILNNISKLAVEKVNNLRSMLSPNGNLKTLEEKKEESIKKVDELVKAFGTKSSTEEQQSFIKTNLIDDKTLSKEVRLQTIDKLLQEQKRAEAIENPSFKTEDVRVVSGKSKLKPISKDNPDIEKAKMVVGRDRVNIKGNIKIMGALMNARDIIQSENLNKSTPIKRE.

Disordered stretches follow at residues 1–34 (DTSE…QTTT) and 347–396 (GQSK…QSQQ). Positions 12 to 27 (EYTEEQKQTLEQEQKE) are enriched in basic and acidic residues. Composition is skewed to polar residues over residues 347 to 372 (GQSK…QHKQ) and 379 to 396 (PTNQ…QSQQ).

It is found in the cytoplasm. This chain is Antigenic heat-stable 120 kDa protein (sca4), found in Rickettsia parkeri.